We begin with the raw amino-acid sequence, 236 residues long: Small ribosomal subunit protein uS3 (236 aa).

The region spanning 39–107 (VRHFLMQKLS…PTQLNIAEVR (69 aa)) is the KH type-2 domain.

It belongs to the universal ribosomal protein uS3 family. As to quaternary structure, part of the 30S ribosomal subunit. Forms a tight complex with proteins S10 and S14.

In terms of biological role, binds the lower part of the 30S subunit head. Binds mRNA in the 70S ribosome, positioning it for translation. The protein is Small ribosomal subunit protein uS3 of Blochmanniella pennsylvanica (strain BPEN).